The sequence spans 616 residues: Secretogranin-2 (616 aa).

The N-terminal stretch at 1–27 (MAEAKTHWLGASLSLILLIFLLATAEA) is a signal peptide. The propeptide occupies 28–30 (ASF). Disordered regions lie at residues 68–104 (QAHKEESSPDYNPYQGVSVPLQQKENSDLPESSRDSL) and 120–146 (AENEPQSSLKENKPYTLNSEKNFPMDM). Basic and acidic residues predominate over residues 92 to 104 (ENSDLPESSRDSL). The segment covering 122-140 (NEPQSSLKENKPYTLNSEK) has biased composition (polar residues). Sulfotyrosine is present on Tyr150. 6 positions are modified to phosphoserine: Ser173, Ser267, Ser431, Ser531, Ser554, and Ser555. Positions 255-283 (KIESQTQEEVRDSKENIEKNEQINDEMKR) are enriched in basic and acidic residues. The segment at 255-290 (KIESQTQEEVRDSKENIEKNEQINDEMKRSGQMGLQ) is disordered. The segment covering 548–560 (ERLNQHSSQETDK) has biased composition (basic and acidic residues). The segment at 548-582 (ERLNQHSSQETDKLALVSKRLPVATPKSDDAPNRQ) is disordered.

This sequence belongs to the chromogranin/secretogranin protein family. Interacts with Secretogranin III/SCG3.

Its subcellular location is the secreted. Functionally, neuroendocrine protein of the granin family that regulates the biogenesis of secretory granules. In Sus scrofa (Pig), this protein is Secretogranin-2 (SCG2).